We begin with the raw amino-acid sequence, 782 residues long: LPS-assembly protein LptD (782 aa).

Positions 1-23 (MNKKHTLISLAILTALYSQQSLA) are cleaved as a signal peptide.

The protein belongs to the LptD family. Component of the lipopolysaccharide transport and assembly complex. Interacts with LptE and LptA.

The protein localises to the cell outer membrane. Functionally, together with LptE, is involved in the assembly of lipopolysaccharide (LPS) at the surface of the outer membrane. This is LPS-assembly protein LptD from Haemophilus influenzae (strain ATCC 51907 / DSM 11121 / KW20 / Rd).